Reading from the N-terminus, the 194-residue chain is Imidazoleglycerol-phosphate dehydratase (194 aa).

This sequence belongs to the imidazoleglycerol-phosphate dehydratase family.

It localises to the cytoplasm. The enzyme catalyses D-erythro-1-(imidazol-4-yl)glycerol 3-phosphate = 3-(imidazol-4-yl)-2-oxopropyl phosphate + H2O. It participates in amino-acid biosynthesis; L-histidine biosynthesis; L-histidine from 5-phospho-alpha-D-ribose 1-diphosphate: step 6/9. The chain is Imidazoleglycerol-phosphate dehydratase from Lactiplantibacillus plantarum (strain ATCC BAA-793 / NCIMB 8826 / WCFS1) (Lactobacillus plantarum).